We begin with the raw amino-acid sequence, 258 residues long: MTQHSRDTPQFYLTAPSPCPYLPGRHERKVFTHLVGDRAGDLNDLLTHGGFRRSQSIAYRPACDQCRACVSVRVIANEFRPSRNFRKVIARNADIIGEQRSAVPTSEQYSVFRAYLDARHRHGGMADMTVLDYAMMVEDSHVETRIIEYRKRGPDSGITGRGEELIAVALTDVLSDGLSMVYSFFEPSQVSRSMGTFMILDHIARARRQGLPYVYLGYWIEGSKKMDYKARFLPQQRLAPSGWLRIDAQGDAASEPQD.

This sequence belongs to the R-transferase family. Bpt subfamily.

The protein localises to the cytoplasm. The enzyme catalyses N-terminal L-glutamyl-[protein] + L-leucyl-tRNA(Leu) = N-terminal L-leucyl-L-glutamyl-[protein] + tRNA(Leu) + H(+). The catalysed reaction is N-terminal L-aspartyl-[protein] + L-leucyl-tRNA(Leu) = N-terminal L-leucyl-L-aspartyl-[protein] + tRNA(Leu) + H(+). Its function is as follows. Functions in the N-end rule pathway of protein degradation where it conjugates Leu from its aminoacyl-tRNA to the N-termini of proteins containing an N-terminal aspartate or glutamate. This is Aspartate/glutamate leucyltransferase from Bradyrhizobium diazoefficiens (strain JCM 10833 / BCRC 13528 / IAM 13628 / NBRC 14792 / USDA 110).